A 215-amino-acid polypeptide reads, in one-letter code: Probable peptidyl-prolyl cis-trans isomerase (215 aa).

The region spanning 38–197 (DGIYAVMETN…RRGAAAKRFV (160 aa)) is the PPIase cyclophilin-type domain.

This sequence belongs to the cyclophilin-type PPIase family.

It catalyses the reaction [protein]-peptidylproline (omega=180) = [protein]-peptidylproline (omega=0). Functionally, PPIases accelerate the folding of proteins. It catalyzes the cis-trans isomerization of proline imidic peptide bonds in oligopeptides. The sequence is that of Probable peptidyl-prolyl cis-trans isomerase (ppiB) from Treponema pallidum (strain Nichols).